A 335-amino-acid chain; its full sequence is Ferrochelatase (335 aa).

2 residues coordinate Fe cation: His207 and Glu288.

It belongs to the ferrochelatase family.

The protein localises to the cytoplasm. It carries out the reaction heme b + 2 H(+) = protoporphyrin IX + Fe(2+). The protein operates within porphyrin-containing compound metabolism; protoheme biosynthesis; protoheme from protoporphyrin-IX: step 1/1. Functionally, catalyzes the ferrous insertion into protoporphyrin IX. The sequence is that of Ferrochelatase from Helicobacter pylori (strain G27).